Consider the following 486-residue polypeptide: Ribosomal RNA small subunit methyltransferase F (486 aa).

S-adenosyl-L-methionine is bound by residues 124–130, Glu148, Asp175, and Asp193; that span reads ASAPGSK. Cys246 serves as the catalytic Nucleophile.

The protein belongs to the class I-like SAM-binding methyltransferase superfamily. RsmB/NOP family.

The protein resides in the cytoplasm. It catalyses the reaction cytidine(1407) in 16S rRNA + S-adenosyl-L-methionine = 5-methylcytidine(1407) in 16S rRNA + S-adenosyl-L-homocysteine + H(+). Functionally, specifically methylates the cytosine at position 1407 (m5C1407) of 16S rRNA. The sequence is that of Ribosomal RNA small subunit methyltransferase F from Shewanella baltica (strain OS223).